A 421-amino-acid chain; its full sequence is Serine hydroxymethyltransferase (421 aa).

(6S)-5,6,7,8-tetrahydrofolate contacts are provided by residues L121 and 125-127; that span reads GHL. The residue at position 230 (K230) is an N6-(pyridoxal phosphate)lysine. Residue 355-357 participates in (6S)-5,6,7,8-tetrahydrofolate binding; the sequence is SPF.

Belongs to the SHMT family. In terms of assembly, homodimer. Requires pyridoxal 5'-phosphate as cofactor.

It is found in the cytoplasm. It carries out the reaction (6R)-5,10-methylene-5,6,7,8-tetrahydrofolate + glycine + H2O = (6S)-5,6,7,8-tetrahydrofolate + L-serine. It participates in one-carbon metabolism; tetrahydrofolate interconversion. The protein operates within amino-acid biosynthesis; glycine biosynthesis; glycine from L-serine: step 1/1. In terms of biological role, catalyzes the reversible interconversion of serine and glycine with tetrahydrofolate (THF) serving as the one-carbon carrier. This reaction serves as the major source of one-carbon groups required for the biosynthesis of purines, thymidylate, methionine, and other important biomolecules. Also exhibits THF-independent aldolase activity toward beta-hydroxyamino acids, producing glycine and aldehydes, via a retro-aldol mechanism. The sequence is that of Serine hydroxymethyltransferase from Cellvibrio japonicus (strain Ueda107) (Pseudomonas fluorescens subsp. cellulosa).